The following is a 685-amino-acid chain: MNKYSAFIVCISLVLLFTKKDVGSHNVDSRIYGFQQSSGICHIYNGTICRDVLSNAHVFVSPNLTMNDLEERLKAAYGVIKESKDMNANCRMYALPSLCFSSMPICRTPERTNLLYFANVATNAKQLKNVSIRRKRTKSKDIKNISIFKKKSTIYEDVFSTDISSKYPPTRESENLKRICREECELLENELCQKEYAIAKRHPVIGMVGVEDCQKLPQHKDCLSLGITIEVDKTENCYWEDGSTYRGVANVSASGKPCLRWSWLMKEISDFPELIGQNYCRNPGSVENSPWCFVDSSRERIIELCDIPKCADKIWIAIVGTTAAIILIFIIIFAIILFKRRTIMHYGMRNIHNINTPSADKNIYGNSQLNNAQDAGRGNLGNLSDHVALNSKLIERNTLLRINHFTLQDVEFLEELGEGAFGKVYKGQLLQPNKTTITVAIKALKENASVKTQQDFKREIELISDLKHQNIVCILGVVLNKEPYCMLFEYMANGDLHEFLISNSPTEGKSLSQLEFLQIALQISEGMQYLSAHHYVHRDLAARNCLVNEGLVVKISDFGLSRDIYSSDYYRVQSKSLLPVRWMPSESILYGKFTTESDVWSFGVVLWEIYSYGMQPYYGFSNQEVINLIRSRQLLSAPENCPTAVYSLMIECWHEQSVKRPTFTDISNRLKTWHEGHFKASNPEM.

The signal sequence occupies residues 1–24; it reads MNKYSAFIVCISLVLLFTKKDVGS. The Extracellular segment spans residues 25-317; the sequence is HNVDSRIYGF…PKCADKIWIA (293 aa). One can recognise an FZ domain in the interval 36-225; that stretch reads QSSGICHIYN…LPQHKDCLSL (190 aa). 8 disulfide bridges follow: Cys41/Cys106, Cys49/Cys99, Cys90/Cys192, Cys180/Cys222, Cys184/Cys213, Cys237/Cys310, Cys258/Cys292, and Cys280/Cys305. 2 N-linked (GlcNAc...) asparagine glycosylation sites follow: Asn45 and Asn63. Thr112 is modified (phosphothreonine). Asn129 carries an N-linked (GlcNAc...) asparagine glycan. A Phosphoserine modification is found at Ser131. N-linked (GlcNAc...) asparagine glycosylation is present at Asn144. The 75-residue stretch at 236-310 folds into the Kringle domain; that stretch reads NCYWEDGSTY…IIELCDIPKC (75 aa). N-linked (GlcNAc...) asparagine glycosylation is present at Asn250. A helical transmembrane segment spans residues 318-338; the sequence is IVGTTAAIILIFIIIFAIILF. Over 339–685 the chain is Cytoplasmic; that stretch reads KRRTIMHYGM…GHFKASNPEM (347 aa). The 268-residue stretch at 410 to 677 folds into the Protein kinase domain; the sequence is VEFLEELGEG…NRLKTWHEGH (268 aa). ATP is bound by residues 416-424 and Lys442; that span reads LGEGAFGKV. The active-site Proton acceptor is the Asp539. Phosphotyrosine; by autocatalysis is present on residues Tyr565, Tyr569, and Tyr570.

This sequence belongs to the protein kinase superfamily. Tyr protein kinase family. ROR subfamily. In terms of tissue distribution, expressed in neurons of the developing nervous system.

Its subcellular location is the membrane. It carries out the reaction L-tyrosyl-[protein] + ATP = O-phospho-L-tyrosyl-[protein] + ADP + H(+). Tyrosine-protein kinase receptor that functions during early stages of neuronal development. The polypeptide is Tyrosine-protein kinase transmembrane receptor Ror (Ror) (Drosophila melanogaster (Fruit fly)).